The chain runs to 1318 residues: DNA-directed RNA polymerase subunit beta' (1318 aa).

Positions 221, 295, 302, and 305 each coordinate Zn(2+).

Belongs to the RNA polymerase beta' chain family. RpoC2 subfamily. In cyanobacteria the RNAP catalytic core is composed of 2 alpha, 1 beta, 1 beta', 1 gamma and 1 omega subunit. When a sigma factor is associated with the core the holoenzyme is formed, which can initiate transcription. It depends on Zn(2+) as a cofactor.

It catalyses the reaction RNA(n) + a ribonucleoside 5'-triphosphate = RNA(n+1) + diphosphate. DNA-dependent RNA polymerase catalyzes the transcription of DNA into RNA using the four ribonucleoside triphosphates as substrates. The chain is DNA-directed RNA polymerase subunit beta' from Synechococcus sp. (strain ATCC 27144 / PCC 6301 / SAUG 1402/1) (Anacystis nidulans).